A 273-amino-acid polypeptide reads, in one-letter code: Rhamnulose-1-phosphate aldolase (273 aa).

E117 is a catalytic residue. Zn(2+) is bound by residues H140, H142, and H211.

Belongs to the aldolase class II family. RhaD subfamily. Zn(2+) serves as cofactor.

The protein resides in the cytoplasm. The catalysed reaction is L-rhamnulose 1-phosphate = (S)-lactaldehyde + dihydroxyacetone phosphate. It participates in carbohydrate degradation; L-rhamnose degradation; glycerone phosphate from L-rhamnose: step 3/3. In terms of biological role, catalyzes the reversible cleavage of L-rhamnulose-1-phosphate to dihydroxyacetone phosphate (DHAP) and L-lactaldehyde. In Listeria monocytogenes serovar 1/2a (strain ATCC BAA-679 / EGD-e), this protein is Rhamnulose-1-phosphate aldolase.